Reading from the N-terminus, the 355-residue chain is Protein pelota homolog (355 aa).

The protein belongs to the eukaryotic release factor 1 family. Pelota subfamily. As to quaternary structure, monomer. A divalent metal cation serves as cofactor.

Its subcellular location is the cytoplasm. Its function is as follows. May function in recognizing stalled ribosomes, interact with stem-loop structures in stalled mRNA molecules, and effect endonucleolytic cleavage of the mRNA. May play a role in the release non-functional ribosomes and degradation of damaged mRNAs. Has endoribonuclease activity. The polypeptide is Protein pelota homolog (Natronomonas pharaonis (strain ATCC 35678 / DSM 2160 / CIP 103997 / JCM 8858 / NBRC 14720 / NCIMB 2260 / Gabara) (Halobacterium pharaonis)).